We begin with the raw amino-acid sequence, 344 residues long: L-sulfolactate dehydrogenase (344 aa).

This sequence belongs to the LDH2/MDH2 oxidoreductase family.

The protein resides in the cytoplasm. The enzyme catalyses a (2S)-2-hydroxycarboxylate + NAD(+) = a 2-oxocarboxylate + NADH + H(+). Its pathway is cofactor biosynthesis; coenzyme M biosynthesis; sulfoacetaldehyde from phosphoenolpyruvate and sulfite: step 3/4. The protein operates within cofactor biosynthesis; 5,6,7,8-tetrahydromethanopterin biosynthesis. Functionally, catalyzes the reduction of sulfopyruvate to (R)-sulfolactate much more efficiently than the reverse reaction. Also catalyzes the reduction of oxaloacetate, alpha-ketoglutarate, and to a much lower extent, KHTCA, but not pyruvate. Involved in the biosynthesis of both coenzyme M (with (R)-sulfolactate) and methanopterin (with alpha-ketoglutarate). In Methanocaldococcus jannaschii (strain ATCC 43067 / DSM 2661 / JAL-1 / JCM 10045 / NBRC 100440) (Methanococcus jannaschii), this protein is L-sulfolactate dehydrogenase (comC).